A 170-amino-acid polypeptide reads, in one-letter code: MTEQKNTNENDLQNGTSKADDDIRYQEVKPVNNKRSGLIGSAVAILVILAIGGGLYYYTTQQATKLRDPDHLLSDNENPGITCALIPTDVKGVEIGHRHFPLNVPFMNGPTRGKDVFVPIDFIIGGPKMAGQGWRMLVECLSVGRGITLPSNSTGGLKSAAMATGATLEF.

Residues 1–17 (MTEQKNTNENDLQNGTS) show a composition bias toward polar residues. The tract at residues 1-24 (MTEQKNTNENDLQNGTSKADDDIR) is disordered. A helical transmembrane segment spans residues 37 to 57 (GLIGSAVAILVILAIGGGLYY).

It is found in the cell membrane. The chain is Protein HemX from Proteus mirabilis.